The chain runs to 114 residues: Flagellar hook-basal body complex protein FliE (114 aa).

This sequence belongs to the FliE family.

The protein localises to the bacterial flagellum basal body. In Burkholderia lata (strain ATCC 17760 / DSM 23089 / LMG 22485 / NCIMB 9086 / R18194 / 383), this protein is Flagellar hook-basal body complex protein FliE.